Reading from the N-terminus, the 369-residue chain is 2-aminoethylphosphonate--pyruvate transaminase (369 aa).

Lys-193 is modified (N6-(pyridoxal phosphate)lysine).

Belongs to the class-V pyridoxal-phosphate-dependent aminotransferase family. PhnW subfamily. Homodimer. Pyridoxal 5'-phosphate serves as cofactor.

The enzyme catalyses (2-aminoethyl)phosphonate + pyruvate = phosphonoacetaldehyde + L-alanine. Its function is as follows. Involved in phosphonate degradation. The polypeptide is 2-aminoethylphosphonate--pyruvate transaminase (Burkholderia mallei (strain NCTC 10247)).